Here is a 448-residue protein sequence, read N- to C-terminus: Trigger factor (448 aa).

In terms of domain architecture, PPIase FKBP-type spans 160-245; sequence GDMLLMKVES…IQEIREEKLP (86 aa).

This sequence belongs to the FKBP-type PPIase family. Tig subfamily.

The protein resides in the cytoplasm. The catalysed reaction is [protein]-peptidylproline (omega=180) = [protein]-peptidylproline (omega=0). Involved in protein export. Acts as a chaperone by maintaining the newly synthesized protein in an open conformation. Functions as a peptidyl-prolyl cis-trans isomerase. The sequence is that of Trigger factor from Dehalococcoides mccartyi (strain ATCC BAA-2266 / KCTC 15142 / 195) (Dehalococcoides ethenogenes (strain 195)).